The following is a 799-amino-acid chain: Homeobox protein engrailed (799 aa).

4 disordered regions span residues 189-331 (LPSR…DATK), 369-444 (GNFL…SLRQ), 554-664 (HPFL…DKAK), and 678-705 (SDRPSSGPRSRKPKRSKAQDEKRPRTAF). Residues 210–222 (QSPSTSIRSNLVS) show a composition bias toward polar residues. Composition is skewed to basic and acidic residues over residues 228–239 (SRRDDQETSDSC) and 246–256 (RAINDSERYDV). 2 stretches are compositionally biased toward polar residues: residues 284-299 (LNLTTTGGDSVSQLFH) and 377-401 (HTFQPNEDHQTVSSAQTTPRFSSPD). Residues 416-431 (ESLSSPSSSSSSSRSS) show a composition bias toward low complexity. Basic and acidic residues-rich tracts occupy residues 608–619 (DQKKRSRDESAS) and 629–648 (VHLKENSQKSDPVLKQEKGN). Positions 698-757 (EKRPRTAFTNDQLQRLKREFDECRYLTETRRKNLADELGLTESQIKIWFQNKRAKIKKSV) form a DNA-binding region, homeobox.

Belongs to the engrailed homeobox family. In terms of tissue distribution, expressed in the dorsal ectoderm of early gastrulae in a band corresponding to the peripheral area of the presumptive shell gland. Also expressed at four points along the posterior ectoderm. In late gastrulae, it is predominantly expressed in the peripheral ectoderm of the shell gland and in spots at the posterior end behind the presumptive foot. Expressed in late trochophore larvae at four points behind the foot, at two locations at the base of the foot and in the peripheral ectoderm of the shell gland.

It is found in the nucleus. In terms of biological role, may be involved in shell and shell gland formation during development. The polypeptide is Homeobox protein engrailed (Lymnaea stagnalis (Great pond snail)).